Here is a 585-residue protein sequence, read N- to C-terminus: Protein DENND6B (585 aa).

Low complexity predominate over residues 1 to 10; that stretch reads MEVPVGPGPR. The disordered stretch occupies residues 1 to 25; that stretch reads MEVPVGPGPRQAGGGLGATRSSSSG. Residues 43-221 enclose the uDENN domain; it reads ECVCVVTFDL…IQVRIPSRVD (179 aa). The region spanning 246–373 is the cDENN domain; sequence VHELDLFRCF…VKLKKPSRLK (128 aa). One can recognise a dDENN domain in the interval 375 to 499; sequence LDTKPGLYTS…KSPHFDGWYR (125 aa).

Belongs to the DENND6 family.

It localises to the recycling endosome. The protein localises to the cytoplasm. Functionally, guanine nucleotide exchange factor (GEF) for RAB14. Also has some, lesser GEF activity towards RAB35. The polypeptide is Protein DENND6B (Dennd6b) (Mus musculus (Mouse)).